Here is a 510-residue protein sequence, read N- to C-terminus: Beta-glucosidase 40 (510 aa).

An N-terminal signal peptide occupies residues 1 to 29 (MAHRRLIMTMTKMMMMVTMMMMMDKTCIC). Residues glutamine 51, histidine 152, and 197–198 (NE) each bind a beta-D-glucoside. Glutamate 198 (proton donor) is an active-site residue. Cysteine 217 and cysteine 225 are joined by a disulfide. 2 N-linked (GlcNAc...) asparagine glycosylation sites follow: asparagine 229 and asparagine 278. Position 341 (tyrosine 341) interacts with a beta-D-glucoside. The N-linked (GlcNAc...) asparagine glycan is linked to asparagine 349. Residues glutamate 414, tryptophan 464, 471-472 (EW), and phenylalanine 480 contribute to the a beta-D-glucoside site. Catalysis depends on glutamate 414, which acts as the Nucleophile. Residue asparagine 507 is glycosylated (N-linked (GlcNAc...) asparagine).

It belongs to the glycosyl hydrolase 1 family.

It carries out the reaction Hydrolysis of terminal, non-reducing beta-D-glucosyl residues with release of beta-D-glucose.. The protein is Beta-glucosidase 40 of Arabidopsis thaliana (Mouse-ear cress).